Consider the following 523-residue polypeptide: Histidine ammonia-lyase (523 aa).

Positions 148 to 150 (ASG) form a cross-link, 5-imidazolinone (Ala-Gly). At Ser149 the chain carries 2,3-didehydroalanine (Ser).

It belongs to the PAL/histidase family. In terms of processing, contains an active site 4-methylidene-imidazol-5-one (MIO), which is formed autocatalytically by cyclization and dehydration of residues Ala-Ser-Gly.

The protein resides in the cytoplasm. It carries out the reaction L-histidine = trans-urocanate + NH4(+). It functions in the pathway amino-acid degradation; L-histidine degradation into L-glutamate; N-formimidoyl-L-glutamate from L-histidine: step 1/3. The polypeptide is Histidine ammonia-lyase (Chloroflexus aurantiacus (strain ATCC 29366 / DSM 635 / J-10-fl)).